The following is a 452-amino-acid chain: Major royal jelly protein 2 (452 aa).

A signal peptide spans 1 to 17 (MTRWLFMVACLGIACQG). N-linked (GlcNAc...) asparagine glycans are attached at residues N145 and N178. Positions 416-452 (NNNQNDNIQNTNNQNDNNQKNNKKNANNQKNNNQNDN) are disordered.

N-linked core structure contains mannose (which consists of 8-alpha-mannosyl residues, one beta-mannosyl residue, and chitobiose). As to expression, secreted from the hypopharyngeal glands of the worker honey bee (at protein level); expression peaks at 12 days post eclosion. Expressed in the brains of adult worker bees peaking at 12 days post eclosion (at protein level). Expressed in the spermatheca of adult queen bees (at protein level); Expression levels are higher in mated queens than in virgin queens.

The protein resides in the secreted. Functionally, highly abundant protein component of royal jelly, a substance produced in the hypopharyngeal gland containing proteins, free amino acids, fatty acids, sugars and other nutrients, which is fed to developing larvae by worker nurse bees. Major royal jelly proteins (MRJPs) are high in essential amino acids and probably have a nutritional function in larval food. All larvae are fed some royal jelly (also known as worker jelly) early in their development but it forms the principal source of nutrition for larvae destined to become queen bees. Produced in the spermatheca of adult queen bees, along with other major royal jelly proteins, where it may act as a nutrient supply for sperm stored by mated queens, or be involved in energy metabolism. The sequence is that of Major royal jelly protein 2 from Apis mellifera (Honeybee).